The sequence spans 198 residues: Holliday junction branch migration complex subunit RuvA (198 aa).

The segment at 1 to 61 (MTLYKIGEIV…DYIQQTYGFK (61 aa)) is domain I. Positions 62–139 (TFKERLLFTD…KIIQNKEVKK (78 aa)) are domain II. Positions 140-144 (FDDIT) are flexible linker. Positions 144 to 198 (TNIKELKQTLNKLGFKASDIDYAVNNISSTKELDLMVEESINLITTQMHANNQTT) are domain III.

It belongs to the RuvA family. Homotetramer. Forms an RuvA(8)-RuvB(12)-Holliday junction (HJ) complex. HJ DNA is sandwiched between 2 RuvA tetramers; dsDNA enters through RuvA and exits via RuvB. An RuvB hexamer assembles on each DNA strand where it exits the tetramer. Each RuvB hexamer is contacted by two RuvA subunits (via domain III) on 2 adjacent RuvB subunits; this complex drives branch migration. In the full resolvosome a probable DNA-RuvA(4)-RuvB(12)-RuvC(2) complex forms which resolves the HJ.

Its subcellular location is the cytoplasm. In terms of biological role, the RuvA-RuvB-RuvC complex processes Holliday junction (HJ) DNA during genetic recombination and DNA repair, while the RuvA-RuvB complex plays an important role in the rescue of blocked DNA replication forks via replication fork reversal (RFR). RuvA specifically binds to HJ cruciform DNA, conferring on it an open structure. The RuvB hexamer acts as an ATP-dependent pump, pulling dsDNA into and through the RuvAB complex. HJ branch migration allows RuvC to scan DNA until it finds its consensus sequence, where it cleaves and resolves the cruciform DNA. The chain is Holliday junction branch migration complex subunit RuvA from Mycoplasmopsis synoviae (strain 53) (Mycoplasma synoviae).